We begin with the raw amino-acid sequence, 341 residues long: Anthranilate phosphoribosyltransferase (341 aa).

5-phospho-alpha-D-ribose 1-diphosphate contacts are provided by residues Gly80, 83-84 (GD), Thr88, 90-93 (NIST), 108-116 (KHGNRSVSS), and Ser120. Gly80 contacts anthranilate. Ser92 serves as a coordination point for Mg(2+). Asn111 is a binding site for anthranilate. Position 166 (Arg166) interacts with anthranilate. Asp225 and Glu226 together coordinate Mg(2+).

It belongs to the anthranilate phosphoribosyltransferase family. Homodimer. The cofactor is Mg(2+).

It catalyses the reaction N-(5-phospho-beta-D-ribosyl)anthranilate + diphosphate = 5-phospho-alpha-D-ribose 1-diphosphate + anthranilate. The protein operates within amino-acid biosynthesis; L-tryptophan biosynthesis; L-tryptophan from chorismate: step 2/5. Catalyzes the transfer of the phosphoribosyl group of 5-phosphorylribose-1-pyrophosphate (PRPP) to anthranilate to yield N-(5'-phosphoribosyl)-anthranilate (PRA). This Shouchella clausii (strain KSM-K16) (Alkalihalobacillus clausii) protein is Anthranilate phosphoribosyltransferase.